The chain runs to 263 residues: Thiamine thiazole synthase (263 aa).

NAD(+)-binding positions include S43, 62–63 (ER), G70, V134, and 160–162 (HID). Positions 162 and 177 each coordinate Fe cation. NAD(+)-binding residues include S180 and M227. R237 is a glycine binding site.

This sequence belongs to the THI4 family. Homooctamer; tetramer of dimers. Requires Fe(2+) as cofactor.

The catalysed reaction is hydrogen sulfide + glycine + NAD(+) = ADP-5-ethyl-4-methylthiazole-2-carboxylate + nicotinamide + 3 H2O + H(+). It participates in cofactor biosynthesis; thiamine diphosphate biosynthesis. Involved in the biosynthesis of the thiazole moiety of thiamine. Catalyzes the conversion of NAD and glycine to adenosine diphosphate 5-(2-hydroxyethyl)-4-methylthiazole-2-carboxylate (ADT), an adenylated thiazole intermediate, using free sulfide as a source of sulfur. The protein is Thiamine thiazole synthase of Methanococcus aeolicus (strain ATCC BAA-1280 / DSM 17508 / OCM 812 / Nankai-3).